The sequence spans 335 residues: Beta-ketoacyl-[acyl-carrier-protein] synthase III 2 (335 aa).

Catalysis depends on residues cysteine 116 and histidine 256. The segment at 257–261 (QANVR) is ACP-binding. Asparagine 286 is an active-site residue.

This sequence belongs to the thiolase-like superfamily. FabH family. As to quaternary structure, homodimer.

Its subcellular location is the cytoplasm. The enzyme catalyses malonyl-[ACP] + acetyl-CoA + H(+) = 3-oxobutanoyl-[ACP] + CO2 + CoA. The protein operates within lipid metabolism; fatty acid biosynthesis. Catalyzes the condensation reaction of fatty acid synthesis by the addition to an acyl acceptor of two carbons from malonyl-ACP. Catalyzes the first condensation reaction which initiates fatty acid synthesis and may therefore play a role in governing the total rate of fatty acid production. Possesses both acetoacetyl-ACP synthase and acetyl transacylase activities. Its substrate specificity determines the biosynthesis of branched-chain and/or straight-chain of fatty acids. This is Beta-ketoacyl-[acyl-carrier-protein] synthase III 2 from Bacteroides thetaiotaomicron (strain ATCC 29148 / DSM 2079 / JCM 5827 / CCUG 10774 / NCTC 10582 / VPI-5482 / E50).